A 397-amino-acid chain; its full sequence is Tryptophan synthase beta chain (397 aa).

An N6-(pyridoxal phosphate)lysine modification is found at Lys87.

Belongs to the TrpB family. Tetramer of two alpha and two beta chains. Pyridoxal 5'-phosphate serves as cofactor.

It catalyses the reaction (1S,2R)-1-C-(indol-3-yl)glycerol 3-phosphate + L-serine = D-glyceraldehyde 3-phosphate + L-tryptophan + H2O. It participates in amino-acid biosynthesis; L-tryptophan biosynthesis; L-tryptophan from chorismate: step 5/5. Functionally, the beta subunit is responsible for the synthesis of L-tryptophan from indole and L-serine. The protein is Tryptophan synthase beta chain of Enterobacter sp. (strain 638).